A 225-amino-acid chain; its full sequence is Ribonuclease 3 (225 aa).

The RNase III domain maps to 7–132 (MKAFEARLGY…VIAAVYRDGG (126 aa)). Position 45 (glutamate 45) interacts with Mg(2+). The active site involves aspartate 49. Residues aspartate 118 and glutamate 121 each contribute to the Mg(2+) site. Residue glutamate 121 is part of the active site. A DRBM domain is found at 157–225 (DAKTALQEWA…AARKLLDSLD (69 aa)).

The protein belongs to the ribonuclease III family. Homodimer. Requires Mg(2+) as cofactor.

The protein localises to the cytoplasm. It catalyses the reaction Endonucleolytic cleavage to 5'-phosphomonoester.. Its function is as follows. Digests double-stranded RNA. Involved in the processing of primary rRNA transcript to yield the immediate precursors to the large and small rRNAs (23S and 16S). Processes some mRNAs, and tRNAs when they are encoded in the rRNA operon. Processes pre-crRNA and tracrRNA of type II CRISPR loci if present in the organism. This is Ribonuclease 3 from Ruegeria pomeroyi (strain ATCC 700808 / DSM 15171 / DSS-3) (Silicibacter pomeroyi).